Reading from the N-terminus, the 455-residue chain is Serine incorporator 2 (455 aa).

11 consecutive transmembrane segments (helical) span residues 5-27 (LGACSLLSCASCLCGSAPCILCS), 40-57 (LIFTFFLFLGVLVSIIML), 96-118 (AVYRMCFATAAFFFFFTLLMLCV), 131-150 (GFWFFKFLILVGLTVGAFYI), 160-182 (FYFGVVGSFLFILIQLVLLIDFA), 202-224 (YAGLFFFTLLFYLLSIAAVALMF), 239-256 (FISLNLTFCVCVSIAAVL), 268-290 (LLQASVITLYTMFVTWSALSSIP), 317-339 (QWWDAPSIVGLIIFLLCTLFISL), 385-407 (TYSYSFFHFCLVLASLHVMMTLT), and 422-444 (WTAVWVKICASWAGLLLYLWTLV).

The protein belongs to the TDE1 family.

The protein resides in the cell membrane. It catalyses the reaction a 1,2-diacyl-sn-glycero-3-phospho-L-serine(in) = a 1,2-diacyl-sn-glycero-3-phospho-L-serine(out). The enzyme catalyses a 1,2-diacyl-sn-glycero-3-phosphocholine(in) = a 1,2-diacyl-sn-glycero-3-phosphocholine(out). The catalysed reaction is a 1,2-diacyl-sn-glycero-3-phosphoethanolamine(in) = a 1,2-diacyl-sn-glycero-3-phosphoethanolamine(out). In terms of biological role, non-ATP-dependent, non-specific lipid transporter for phosphatidylserine, phosphatidylcholine, and phosphatidylethanolamine. Functions as a scramblase that flips lipids in both directions across the membrane. In contrast to SERINC3 and SERINC5, has no effect on HIV-1 particles infectivity. The chain is Serine incorporator 2 from Homo sapiens (Human).